Consider the following 104-residue polypeptide: uncharacterized protein (104 aa).

The next 2 helical transmembrane spans lie at 53 to 73 (IWGI…NWDF) and 74 to 94 (ILNL…LILI).

It is found in the cell membrane. This is an uncharacterized protein from Methanocaldococcus jannaschii (strain ATCC 43067 / DSM 2661 / JAL-1 / JCM 10045 / NBRC 100440) (Methanococcus jannaschii).